A 282-amino-acid polypeptide reads, in one-letter code: 2,3,4,5-tetrahydropyridine-2,6-dicarboxylate N-succinyltransferase (282 aa).

2 residues coordinate substrate: Arg-109 and Asp-146.

Belongs to the transferase hexapeptide repeat family. As to quaternary structure, homotrimer.

Its subcellular location is the cytoplasm. It catalyses the reaction (S)-2,3,4,5-tetrahydrodipicolinate + succinyl-CoA + H2O = (S)-2-succinylamino-6-oxoheptanedioate + CoA. Its pathway is amino-acid biosynthesis; L-lysine biosynthesis via DAP pathway; LL-2,6-diaminopimelate from (S)-tetrahydrodipicolinate (succinylase route): step 1/3. This Bartonella quintana (strain Toulouse) (Rochalimaea quintana) protein is 2,3,4,5-tetrahydropyridine-2,6-dicarboxylate N-succinyltransferase.